The primary structure comprises 1093 residues: Isomaltosyltransferase (1093 aa).

A signal peptide spans 1 to 29 (MYVRNLTGSFRFSLSFLLCFCLFVPSIYA). Aspartate 566 serves as the catalytic Nucleophile. The active site involves glutamate 569. Aspartate 631 serves as the catalytic Proton donor. In terms of domain architecture, CBM6 spans 968–1091 (VEYEAEFGVQ…GINFDNIAIV (124 aa)).

Belongs to the glycosyl hydrolase 31 family.

The protein localises to the secreted. The enzyme catalyses 2 alpha-isomaltosyl-(1-&gt;4)-D-maltotriose = alpha-isomaltosyl-(1-&gt;3)-alpha-isomaltosyl-(1-&gt;4)-D-maltotriose + D-maltotriose. It carries out the reaction alpha-isomaltosyl-(1-&gt;3)-alpha-isomaltosyl-(1-&gt;4)-D-maltotriose = cyclobis-(1-&gt;3)-alpha-D-isomaltosyl + D-maltotriose. Strongly inhibited by Hg(2+) and moderately inhibited by Cu(2+) and Pb(2+). Other metal ions, Tris and EDTA have almost no effects. Functionally, glycosyltransferase involved, together with CtsZ, in the conversion of alpha-1,4-glucan into a cyclic tetrasaccharide (CTS) constructed from four alpha-glucopyranosyl residues. Catalyzes the alpha-(1-&gt;3) transfer of the isomaltosyl moiety of alpha-isomaltosyl-(1-&gt;4)-D-maltotriose to another alpha-isomaltosyl-(1-&gt;4)-D-maltotriose, resulting in alpha-isomaltosyl-(1-&gt;3)-alpha-isomaltosyl-alpha-(1-&gt;4)-maltotriose formation. In addition, the enzyme catalyzes the intramolecular cyclization of the product, generating the cyclic tetrasaccharide cyclobis-(1-&gt;6)-alpha-nigerosyl. In Sporosarcina globispora (Bacillus globisporus), this protein is Isomaltosyltransferase.